Consider the following 451-residue polypeptide: Phosphoglucosamine mutase (451 aa).

The Phosphoserine intermediate role is filled by serine 101. 4 residues coordinate Mg(2+): serine 101, aspartate 240, aspartate 242, and aspartate 244. Serine 101 carries the post-translational modification Phosphoserine.

It belongs to the phosphohexose mutase family. Requires Mg(2+) as cofactor. In terms of processing, activated by phosphorylation.

The catalysed reaction is alpha-D-glucosamine 1-phosphate = D-glucosamine 6-phosphate. Its function is as follows. Catalyzes the conversion of glucosamine-6-phosphate to glucosamine-1-phosphate. This chain is Phosphoglucosamine mutase, found in Streptococcus pyogenes serotype M3 (strain SSI-1).